The following is a 436-amino-acid chain: MKQPLKLTTRQGERIAVVAGLRTPFAKQATAFHGVPAVDLGKLVVSELLARTSLDPKLIDQLVFGQVVQMPEAPNIAREIVLGTGMSVTTDAYSVSRACATSFQAVANVTESIMAGTVDIAIAGGADSSSVLPIGVSKKLARALVDLNKARNLQQRFNILRALRLKDLMPVPPAVAEYSTGLSMGQTAEQMAKSHQISREAQDALAHRSHTLAAQAWADGKLSGEVFTAHVPPYKSPLERDNNIRESSDLASYAKLKPVFDRVHGTVTAANATPLTDGAAAVLLMREGRAKELGLEPLGYIRSFAFSAIDVWQDMLMGPSYATPLALERAGITLADLTLIDMHEAFAAQTLANLKMFASAEFARDKLGRSQAIGEVDMDKFNVLGGSLAYGHPFAATGARMITQTLHELRRRGGGLGLNTACAAGGLGVAMVLEVE.

Cys99 acts as the Acyl-thioester intermediate in catalysis. Catalysis depends on proton acceptor residues His392 and Cys422.

The protein belongs to the thiolase-like superfamily. Thiolase family. In terms of assembly, heterotetramer of two alpha chains (FadJ) and two beta chains (FadI).

The protein localises to the cytoplasm. It carries out the reaction an acyl-CoA + acetyl-CoA = a 3-oxoacyl-CoA + CoA. Its pathway is lipid metabolism; fatty acid beta-oxidation. Catalyzes the final step of fatty acid oxidation in which acetyl-CoA is released and the CoA ester of a fatty acid two carbons shorter is formed. The polypeptide is 3-ketoacyl-CoA thiolase (Aeromonas salmonicida (strain A449)).